The chain runs to 143 residues: ATP synthase subunit b' (143 aa).

The chain crosses the membrane as a helical span at residues 6-26; sequence ATLPFMALQFLLLAAVLNAIF.

Belongs to the ATPase B chain family. In terms of assembly, F-type ATPases have 2 components, F(1) - the catalytic core - and F(0) - the membrane proton channel. F(1) has five subunits: alpha(3), beta(3), gamma(1), delta(1), epsilon(1). F(0) has four main subunits: a(1), b(1), b'(1) and c(10-14). The alpha and beta chains form an alternating ring which encloses part of the gamma chain. F(1) is attached to F(0) by a central stalk formed by the gamma and epsilon chains, while a peripheral stalk is formed by the delta, b and b' chains.

The protein resides in the cellular thylakoid membrane. Functionally, f(1)F(0) ATP synthase produces ATP from ADP in the presence of a proton or sodium gradient. F-type ATPases consist of two structural domains, F(1) containing the extramembraneous catalytic core and F(0) containing the membrane proton channel, linked together by a central stalk and a peripheral stalk. During catalysis, ATP synthesis in the catalytic domain of F(1) is coupled via a rotary mechanism of the central stalk subunits to proton translocation. Its function is as follows. Component of the F(0) channel, it forms part of the peripheral stalk, linking F(1) to F(0). The b'-subunit is a diverged and duplicated form of b found in plants and photosynthetic bacteria. The sequence is that of ATP synthase subunit b' from Nostoc punctiforme (strain ATCC 29133 / PCC 73102).